We begin with the raw amino-acid sequence, 188 residues long: Large ribosomal subunit protein eL18 (188 aa).

A Glycyl lysine isopeptide (Lys-Gly) (interchain with G-Cter in SUMO2) cross-link involves residue Lys-119. Residue Ser-130 is modified to Phosphoserine. The disordered stretch occupies residues 151–188; the sequence is HFGKAPGTPHSHTKPYVRSKGRKFERARGRRASRGYKN. Position 158 is a phosphothreonine (Thr-158). 2 stretches are compositionally biased toward basic residues: residues 161 to 171 and 178 to 188; these read SHTKPYVRSKG and RGRRASRGYKN. Residue Lys-164 forms a Glycyl lysine isopeptide (Lys-Gly) (interchain with G-Cter in SUMO2) linkage.

This sequence belongs to the eukaryotic ribosomal protein eL18 family. As to quaternary structure, component of the large ribosomal subunit.

It localises to the cytoplasm. It is found in the cytosol. Its subcellular location is the rough endoplasmic reticulum. Functionally, component of the large ribosomal subunit. The ribosome is a large ribonucleoprotein complex responsible for the synthesis of proteins in the cell. This Canis lupus familiaris (Dog) protein is Large ribosomal subunit protein eL18 (RPL18).